A 261-amino-acid polypeptide reads, in one-letter code: Secreted RxLR effector protein 154 (261 aa).

The N-terminal stretch at 1 to 18 is a signal peptide; it reads MRRCALLFRLFLISYSCS. The short motif at 49–64 is the RxLR-dEER element; the sequence is RILQADDPEHIRTEER.

The protein belongs to the RxLR effector family.

The protein resides in the secreted. The protein localises to the host cell membrane. In terms of biological role, secreted effector that completely suppresses the host cell death induced by cell death-inducing proteins. This chain is Secreted RxLR effector protein 154, found in Plasmopara viticola (Downy mildew of grapevine).